A 225-amino-acid chain; its full sequence is Enolase-phosphatase E1 (225 aa).

The protein belongs to the HAD-like hydrolase superfamily. MasA/MtnC family. As to quaternary structure, monomer. The cofactor is Mg(2+).

The enzyme catalyses 5-methylsulfanyl-2,3-dioxopentyl phosphate + H2O = 1,2-dihydroxy-5-(methylsulfanyl)pent-1-en-3-one + phosphate. Its pathway is amino-acid biosynthesis; L-methionine biosynthesis via salvage pathway; L-methionine from S-methyl-5-thio-alpha-D-ribose 1-phosphate: step 3/6. It participates in amino-acid biosynthesis; L-methionine biosynthesis via salvage pathway; L-methionine from S-methyl-5-thio-alpha-D-ribose 1-phosphate: step 4/6. Bifunctional enzyme that catalyzes the enolization of 2,3-diketo-5-methylthiopentyl-1-phosphate (DK-MTP-1-P) into the intermediate 2-hydroxy-3-keto-5-methylthiopentenyl-1-phosphate (HK-MTPenyl-1-P), which is then dephosphorylated to form the acireductone 1,2-dihydroxy-3-keto-5-methylthiopentene (DHK-MTPene). The polypeptide is Enolase-phosphatase E1 (Shewanella woodyi (strain ATCC 51908 / MS32)).